A 438-amino-acid polypeptide reads, in one-letter code: Glutamyl-tRNA(Gln) amidotransferase subunit D (438 aa).

The region spanning 92–422 is the Asparaginase/glutaminase domain; that stretch reads PEVTIIGTGG…EEVRKMMLTN (331 aa). Residues threonine 102, threonine 178, aspartate 179, and lysine 256 contribute to the active site.

Belongs to the asparaginase 1 family. GatD subfamily. In terms of assembly, heterodimer of GatD and GatE.

The catalysed reaction is L-glutamyl-tRNA(Gln) + L-glutamine + ATP + H2O = L-glutaminyl-tRNA(Gln) + L-glutamate + ADP + phosphate + H(+). In terms of biological role, allows the formation of correctly charged Gln-tRNA(Gln) through the transamidation of misacylated Glu-tRNA(Gln) in organisms which lack glutaminyl-tRNA synthetase. The reaction takes place in the presence of glutamine and ATP through an activated gamma-phospho-Glu-tRNA(Gln). The GatDE system is specific for glutamate and does not act on aspartate. In Pyrococcus abyssi (strain GE5 / Orsay), this protein is Glutamyl-tRNA(Gln) amidotransferase subunit D.